The chain runs to 88 residues: Meiosis-expressed gene 1 protein (88 aa).

It belongs to the MEIG1 family. As to quaternary structure, interacts with PACRG. Interacts with MORN3. As to expression, expressed in the testes (at protein level). Expressed in the ovary. Several isoforms have been identified differing in their 5'-untranslated exons. These isoforms show different tissue expression. Some are expressed in various tissues, including lung, liver, brain, testis, oviduct and oocytes. Some are testis-specific.

In terms of biological role, essential for spermiogenesis. This is Meiosis-expressed gene 1 protein from Mus musculus (Mouse).